A 573-amino-acid chain; its full sequence is 2-isopropylmalate synthase (573 aa).

Residues 37–314 (PRWLSTDLRD…DPQIDFSNID (278 aa)) enclose the Pyruvate carboxyltransferase domain. Residues Asp46, His253, His255, and Asn289 each coordinate Mg(2+). Residues 456–573 (NPRNPWGRIQ…VVSAVNRAAR (118 aa)) are regulatory domain.

Belongs to the alpha-IPM synthase/homocitrate synthase family. LeuA type 2 subfamily. In terms of assembly, homodimer. The cofactor is Mg(2+).

The protein resides in the cytoplasm. The catalysed reaction is 3-methyl-2-oxobutanoate + acetyl-CoA + H2O = (2S)-2-isopropylmalate + CoA + H(+). It participates in amino-acid biosynthesis; L-leucine biosynthesis; L-leucine from 3-methyl-2-oxobutanoate: step 1/4. In terms of biological role, catalyzes the condensation of the acetyl group of acetyl-CoA with 3-methyl-2-oxobutanoate (2-ketoisovalerate) to form 3-carboxy-3-hydroxy-4-methylpentanoate (2-isopropylmalate). The sequence is that of 2-isopropylmalate synthase from Streptomyces avermitilis (strain ATCC 31267 / DSM 46492 / JCM 5070 / NBRC 14893 / NCIMB 12804 / NRRL 8165 / MA-4680).